A 295-amino-acid polypeptide reads, in one-letter code: GTPase Era (295 aa).

In terms of domain architecture, Era-type G spans 4-171 (KSGFVTIIGR…IKQIVSFLPE (168 aa)). The G1 stretch occupies residues 12–19 (GRPNVGKS). Position 12–19 (12–19 (GRPNVGKS)) interacts with GTP. The segment at 38-42 (QTTRN) is G2. Residues 59–62 (DTPG) form a G3 region. GTP is bound by residues 59–63 (DTPGI) and 121–124 (NKID). The segment at 121-124 (NKID) is G4. Residues 150–152 (ISA) form a G5 region. The region spanning 202–280 (LDQEIPHGIA…FLELWVKVNE (79 aa)) is the KH type-2 domain.

Belongs to the TRAFAC class TrmE-Era-EngA-EngB-Septin-like GTPase superfamily. Era GTPase family. Monomer.

The protein localises to the cytoplasm. Its subcellular location is the cell membrane. Its function is as follows. An essential GTPase that binds both GDP and GTP, with rapid nucleotide exchange. Plays a role in 16S rRNA processing and 30S ribosomal subunit biogenesis and possibly also in cell cycle regulation and energy metabolism. This is GTPase Era from Alkaliphilus metalliredigens (strain QYMF).